The sequence spans 290 residues: Acetyl-coenzyme A carboxylase carboxyl transferase subunit beta (290 aa).

A CoA carboxyltransferase N-terminal domain is found at leucine 27–alanine 290. Zn(2+) is bound by residues cysteine 31, cysteine 34, cysteine 50, and cysteine 53. Residues cysteine 31–cysteine 53 form a C4-type zinc finger.

It belongs to the AccD/PCCB family. Acetyl-CoA carboxylase is a heterohexamer composed of biotin carboxyl carrier protein (AccB), biotin carboxylase (AccC) and two subunits each of ACCase subunit alpha (AccA) and ACCase subunit beta (AccD). It depends on Zn(2+) as a cofactor.

Its subcellular location is the cytoplasm. The catalysed reaction is N(6)-carboxybiotinyl-L-lysyl-[protein] + acetyl-CoA = N(6)-biotinyl-L-lysyl-[protein] + malonyl-CoA. It participates in lipid metabolism; malonyl-CoA biosynthesis; malonyl-CoA from acetyl-CoA: step 1/1. In terms of biological role, component of the acetyl coenzyme A carboxylase (ACC) complex. Biotin carboxylase (BC) catalyzes the carboxylation of biotin on its carrier protein (BCCP) and then the CO(2) group is transferred by the transcarboxylase to acetyl-CoA to form malonyl-CoA. This chain is Acetyl-coenzyme A carboxylase carboxyl transferase subunit beta, found in Pseudomonas paraeruginosa (strain DSM 24068 / PA7) (Pseudomonas aeruginosa (strain PA7)).